Consider the following 709-residue polypeptide: Polyribonucleotide nucleotidyltransferase (709 aa).

Mg(2+)-binding residues include D489 and D495. Residues 556–615 (PKIDMIKIDVDKIKVVIGKGGETIDKIIAETGVKIDIDEEGNVSIFSSDQAAIDRTKDII) enclose the KH domain. The S1 motif domain occupies 625 to 693 (GEVYHAKVVR…DKGRVDASMK (69 aa)).

This sequence belongs to the polyribonucleotide nucleotidyltransferase family. Requires Mg(2+) as cofactor.

It is found in the cytoplasm. The enzyme catalyses RNA(n+1) + phosphate = RNA(n) + a ribonucleoside 5'-diphosphate. Involved in mRNA degradation. Catalyzes the phosphorolysis of single-stranded polyribonucleotides processively in the 3'- to 5'-direction. This is Polyribonucleotide nucleotidyltransferase from Streptococcus agalactiae serotype Ia (strain ATCC 27591 / A909 / CDC SS700).